A 113-amino-acid chain; its full sequence is Cysteine proteinase inhibitor 6 (113 aa).

The N-terminal stretch at 1 to 18 (MAMTTRTLLLAAVCAAAA) is a signal peptide. Residues 65-69 (QVVSG) carry the Secondary area of contact motif.

It belongs to the cystatin family. Phytocystatin subfamily.

The protein localises to the secreted. In terms of biological role, specific inhibitor of cysteine proteinases. Probably involved in the regulation of endogenous processes and in defense against pests and pathogens. In Oryza sativa subsp. japonica (Rice), this protein is Cysteine proteinase inhibitor 6.